The following is a 368-amino-acid chain: Germination protease (368 aa).

Residues 1–16 (MEKKKLDLSQYAVRTD) constitute a propeptide that is removed on maturation.

It belongs to the peptidase A25 family. As to quaternary structure, homotetramer. In terms of processing, autoproteolytically processed. The inactive tetrameric zymogen termed p46 autoprocesses to a smaller form termed p41, which is active only during spore germination.

It catalyses the reaction Endopeptidase action with P4 Glu or Asp, P1 preferably Glu &gt; Asp, P1' hydrophobic and P2' Ala.. In terms of biological role, initiates the rapid degradation of small, acid-soluble proteins during spore germination. The polypeptide is Germination protease (Bacillus licheniformis (strain ATCC 14580 / DSM 13 / JCM 2505 / CCUG 7422 / NBRC 12200 / NCIMB 9375 / NCTC 10341 / NRRL NRS-1264 / Gibson 46)).